Consider the following 923-residue polypeptide: Isoleucine--tRNA ligase (923 aa).

The short motif at Pro-57 to Thr-67 is the 'HIGH' region element. Position 561 (Glu-561) interacts with L-isoleucyl-5'-AMP. A 'KMSKS' region motif is present at residues Ala-602–Ser-606. Lys-605 lines the ATP pocket. Residues Cys-895, Cys-898, Cys-915, and Cys-918 each coordinate Zn(2+).

This sequence belongs to the class-I aminoacyl-tRNA synthetase family. IleS type 1 subfamily. Monomer. It depends on Zn(2+) as a cofactor.

The protein localises to the cytoplasm. It carries out the reaction tRNA(Ile) + L-isoleucine + ATP = L-isoleucyl-tRNA(Ile) + AMP + diphosphate. Functionally, catalyzes the attachment of isoleucine to tRNA(Ile). As IleRS can inadvertently accommodate and process structurally similar amino acids such as valine, to avoid such errors it has two additional distinct tRNA(Ile)-dependent editing activities. One activity is designated as 'pretransfer' editing and involves the hydrolysis of activated Val-AMP. The other activity is designated 'posttransfer' editing and involves deacylation of mischarged Val-tRNA(Ile). The chain is Isoleucine--tRNA ligase from Brachyspira hyodysenteriae (strain ATCC 49526 / WA1).